Reading from the N-terminus, the 416-residue chain is L-cysteine:1D-myo-inositol 2-amino-2-deoxy-alpha-D-glucopyranoside ligase (416 aa).

Cys45 contacts Zn(2+). L-cysteinyl-5'-AMP is bound by residues 45–48, Thr60, and 83–85; these read CGIT and NVT. Positions 47–57 match the 'HIGH' region motif; the sequence is ITPYDSTHLGH. The 'ERGGDP' region signature appears at 191–196; that stretch reads ERGGDP. Trp232 provides a ligand contact to L-cysteinyl-5'-AMP. Cys236 contributes to the Zn(2+) binding site. Residue 254-256 coordinates L-cysteinyl-5'-AMP; it reads GSD. His261 lines the Zn(2+) pocket. Val286 lines the L-cysteinyl-5'-AMP pocket. The 'KMSKS' region signature appears at 292–296; that stretch reads KMSKS.

Belongs to the class-I aminoacyl-tRNA synthetase family. MshC subfamily. Monomer. The cofactor is Zn(2+).

It catalyses the reaction 1D-myo-inositol 2-amino-2-deoxy-alpha-D-glucopyranoside + L-cysteine + ATP = 1D-myo-inositol 2-(L-cysteinylamino)-2-deoxy-alpha-D-glucopyranoside + AMP + diphosphate + H(+). Functionally, catalyzes the ATP-dependent condensation of GlcN-Ins and L-cysteine to form L-Cys-GlcN-Ins. The sequence is that of L-cysteine:1D-myo-inositol 2-amino-2-deoxy-alpha-D-glucopyranoside ligase from Brachybacterium faecium (strain ATCC 43885 / DSM 4810 / JCM 11609 / LMG 19847 / NBRC 14762 / NCIMB 9860 / 6-10).